The sequence spans 141 residues: Transcriptional regulator MraZ (141 aa).

2 SpoVT-AbrB domains span residues T5 to D47 and A76 to L119.

It belongs to the MraZ family. In terms of assembly, homooctamer. Forms a ring.

The protein resides in the cytoplasm. Its subcellular location is the nucleoid. This is Transcriptional regulator MraZ from Mycoplasma pneumoniae (strain ATCC 29342 / M129 / Subtype 1) (Mycoplasmoides pneumoniae).